The primary structure comprises 122 residues: Truncated CrmB protein (122 aa).

Its function is as follows. The protein is truncated in this strain and presumably inactive. It has similarities with variola virus CrmB, but the product is inactivated due to several premature stop codons. This Bos taurus (Bovine) protein is Truncated CrmB protein (OPG002).